The primary structure comprises 174 residues: Nucleoside diphosphate kinase (174 aa).

Residues Lys14, Phe62, Arg90, Thr96, and Arg107 each contribute to the ATP site. Residue His123 is the Pros-phosphohistidine intermediate of the active site.

This sequence belongs to the NDK family. Mg(2+) serves as cofactor.

It localises to the cytoplasm. The catalysed reaction is a 2'-deoxyribonucleoside 5'-diphosphate + ATP = a 2'-deoxyribonucleoside 5'-triphosphate + ADP. It catalyses the reaction a ribonucleoside 5'-diphosphate + ATP = a ribonucleoside 5'-triphosphate + ADP. Major role in the synthesis of nucleoside triphosphates other than ATP. The ATP gamma phosphate is transferred to the NDP beta phosphate via a ping-pong mechanism, using a phosphorylated active-site intermediate. This chain is Nucleoside diphosphate kinase, found in Thermococcus kodakarensis (strain ATCC BAA-918 / JCM 12380 / KOD1) (Pyrococcus kodakaraensis (strain KOD1)).